Reading from the N-terminus, the 496-residue chain is Maturase K (496 aa).

Belongs to the intron maturase 2 family. MatK subfamily.

Its subcellular location is the plastid. The protein localises to the chloroplast. Usually encoded in the trnK tRNA gene intron. Probably assists in splicing its own and other chloroplast group II introns. This Paeonia cambessedesii (Majorcan peony) protein is Maturase K.